A 236-amino-acid polypeptide reads, in one-letter code: 4-aminobenzoate synthase (236 aa).

Residues Glu87, His94, Glu148, His180, Asp184, and His187 each coordinate Fe(2+).

Belongs to the CADD family. In terms of assembly, homodimer. Fe(2+) serves as cofactor. Requires Mn(2+) as cofactor.

Its function is as follows. Involved in de novo para-aminobenzoate (PABA) biosynthesis. Acts as a self-sacrificing or 'suicide' enzyme that utilizes its own active site tyrosine residue(s) as the substrate for PABA synthesis. The side chain of the tyrosine residue is released from the protein backbone via cleavage of the C(alpha)-C(beta) bond, leaving a glycine in place of the original tyrosine residue. Reaction requires O(2) and a reduced dimetal cofactor. This Chlamydia muridarum (strain MoPn / Nigg) protein is 4-aminobenzoate synthase.